The chain runs to 454 residues: CCA-adding enzyme (454 aa).

2 residues coordinate ATP: S59 and R62. CTP contacts are provided by S59 and R62. Mg(2+) is bound by residues D71, D73, and D125. Residues H148, K167, and Y176 each contribute to the ATP site. H148, K167, and Y176 together coordinate CTP.

Belongs to the tRNA nucleotidyltransferase/poly(A) polymerase family. Archaeal CCA-adding enzyme subfamily. In terms of assembly, homodimer. The cofactor is Mg(2+).

The catalysed reaction is a tRNA precursor + 2 CTP + ATP = a tRNA with a 3' CCA end + 3 diphosphate. The enzyme catalyses a tRNA with a 3' CCA end + 2 CTP + ATP = a tRNA with a 3' CCACCA end + 3 diphosphate. Functionally, catalyzes the addition and repair of the essential 3'-terminal CCA sequence in tRNAs without using a nucleic acid template. Adds these three nucleotides in the order of C, C, and A to the tRNA nucleotide-73, using CTP and ATP as substrates and producing inorganic pyrophosphate. tRNA 3'-terminal CCA addition is required both for tRNA processing and repair. Also involved in tRNA surveillance by mediating tandem CCA addition to generate a CCACCA at the 3' terminus of unstable tRNAs. While stable tRNAs receive only 3'-terminal CCA, unstable tRNAs are marked with CCACCA and rapidly degraded. The chain is CCA-adding enzyme from Methanosarcina acetivorans (strain ATCC 35395 / DSM 2834 / JCM 12185 / C2A).